Reading from the N-terminus, the 247-residue chain is Uracil-DNA glycosylase (247 aa).

Asp-83 serves as the catalytic Proton acceptor.

This sequence belongs to the uracil-DNA glycosylase (UDG) superfamily. UNG family.

It localises to the cytoplasm. The enzyme catalyses Hydrolyzes single-stranded DNA or mismatched double-stranded DNA and polynucleotides, releasing free uracil.. In terms of biological role, excises uracil residues from the DNA which can arise as a result of misincorporation of dUMP residues by DNA polymerase or due to deamination of cytosine. This is Uracil-DNA glycosylase from Deinococcus radiodurans (strain ATCC 13939 / DSM 20539 / JCM 16871 / CCUG 27074 / LMG 4051 / NBRC 15346 / NCIMB 9279 / VKM B-1422 / R1).